The primary structure comprises 155 residues: Transcriptional repressor NrdR (155 aa).

Residues 3–34 (CPFCGNIDTQVKDSRPAEDHVSIRRRRFCPAC) fold into a zinc finger. The ATP-cone domain maps to 49-139 (LVVIKSSGKR…VYKNFQAADD (91 aa)).

This sequence belongs to the NrdR family. The cofactor is Zn(2+).

In terms of biological role, negatively regulates transcription of bacterial ribonucleotide reductase nrd genes and operons by binding to NrdR-boxes. This chain is Transcriptional repressor NrdR, found in Cereibacter sphaeroides (strain ATCC 17029 / ATH 2.4.9) (Rhodobacter sphaeroides).